The chain runs to 129 residues: Protein RALF-like 34 (129 aa).

The N-terminal stretch at 1 to 23 is a signal peptide; that stretch reads MAASSLNLLLILSLLTFISLQRS. Residues 24–76 constitute a propeptide, removed in mature form; it reads ESLSDNPSLTLLPDGFDWPISHSDEFDIIDGEESFEVTEEDDGVTDRRSLYWR. Intrachain disulfides connect C94–C107 and C121–C127.

This sequence belongs to the plant rapid alkalinization factor (RALF) family. Post-translationally, proteolytically cleaved, probably by S1P, a subtilisin-like serine protease (subtilase). As to expression, expressed in roots, stems and leaves.

The protein resides in the secreted. In terms of biological role, cell signaling peptide that may regulate plant stress, growth, and development. Mediates a rapid alkalinization of extracellular space by mediating a transient increase in the cytoplasmic Ca(2+) concentration leading to a calcium-dependent signaling events through a cell surface receptor and a concomitant activation of some intracellular mitogen-activated protein kinases. The chain is Protein RALF-like 34 (RALFL34) from Arabidopsis thaliana (Mouse-ear cress).